The primary structure comprises 315 residues: Methionyl-tRNA formyltransferase (315 aa).

113 to 116 (SLLP) contributes to the (6S)-5,6,7,8-tetrahydrofolate binding site.

The protein belongs to the Fmt family.

It carries out the reaction L-methionyl-tRNA(fMet) + (6R)-10-formyltetrahydrofolate = N-formyl-L-methionyl-tRNA(fMet) + (6S)-5,6,7,8-tetrahydrofolate + H(+). Functionally, attaches a formyl group to the free amino group of methionyl-tRNA(fMet). The formyl group appears to play a dual role in the initiator identity of N-formylmethionyl-tRNA by promoting its recognition by IF2 and preventing the misappropriation of this tRNA by the elongation apparatus. The chain is Methionyl-tRNA formyltransferase from Pectobacterium carotovorum subsp. carotovorum (strain PC1).